A 284-amino-acid chain; its full sequence is Acetylglutamate kinase (284 aa).

Substrate is bound by residues 64 to 65 (GG), R86, and N179.

The protein belongs to the acetylglutamate kinase family. ArgB subfamily.

The protein resides in the cytoplasm. It catalyses the reaction N-acetyl-L-glutamate + ATP = N-acetyl-L-glutamyl 5-phosphate + ADP. The protein operates within amino-acid biosynthesis; L-arginine biosynthesis; N(2)-acetyl-L-ornithine from L-glutamate: step 2/4. Its function is as follows. Catalyzes the ATP-dependent phosphorylation of N-acetyl-L-glutamate. The sequence is that of Acetylglutamate kinase from Prochlorococcus marinus subsp. pastoris (strain CCMP1986 / NIES-2087 / MED4).